We begin with the raw amino-acid sequence, 485 residues long: Peptidyl-prolyl cis-trans isomerase-like 4 (485 aa).

The region spanning methionine 1–isoleucine 172 is the PPIase cyclophilin-type domain. In terms of domain architecture, RRM spans asparagine 251–serine 329. The disordered stretch occupies residues asparagine 377–arginine 485. Residues arginine 426–arginine 485 show a composition bias toward basic and acidic residues.

This sequence belongs to the cyclophilin-type PPIase family. PPIL4 subfamily.

The protein localises to the nucleus. The enzyme catalyses [protein]-peptidylproline (omega=180) = [protein]-peptidylproline (omega=0). In terms of biological role, PPIases accelerate the folding of proteins. It catalyzes the cis-trans isomerization of proline imidic peptide bonds in oligopeptides. This is Peptidyl-prolyl cis-trans isomerase-like 4 (CYP6) from Gibberella zeae (strain ATCC MYA-4620 / CBS 123657 / FGSC 9075 / NRRL 31084 / PH-1) (Wheat head blight fungus).